The chain runs to 64 residues: Defensin-like protein 123 (64 aa).

Intrachain disulfides connect Cys19–Cys62, Cys29–Cys49, Cys34–Cys56, and Cys38–Cys58.

The protein belongs to the DEFL family.

This chain is Defensin-like protein 123, found in Arabidopsis thaliana (Mouse-ear cress).